A 216-amino-acid chain; its full sequence is Octanoyltransferase (216 aa).

One can recognise a BPL/LPL catalytic domain in the interval 31–205 (STTRDEVWLV…ELVTLLDYEQ (175 aa)). Residues 70–77 (RGGQVTYH), 137–139 (SLG), and 150–152 (GLA) each bind substrate. The Acyl-thioester intermediate role is filled by Cys168.

This sequence belongs to the LipB family.

Its subcellular location is the cytoplasm. It carries out the reaction octanoyl-[ACP] + L-lysyl-[protein] = N(6)-octanoyl-L-lysyl-[protein] + holo-[ACP] + H(+). Its pathway is protein modification; protein lipoylation via endogenous pathway; protein N(6)-(lipoyl)lysine from octanoyl-[acyl-carrier-protein]: step 1/2. Its function is as follows. Catalyzes the transfer of endogenously produced octanoic acid from octanoyl-acyl-carrier-protein onto the lipoyl domains of lipoate-dependent enzymes. Lipoyl-ACP can also act as a substrate although octanoyl-ACP is likely to be the physiological substrate. This chain is Octanoyltransferase, found in Vibrio cholerae serotype O1 (strain ATCC 39315 / El Tor Inaba N16961).